We begin with the raw amino-acid sequence, 360 residues long: MPELVVTALLAPSRLSLKLLRAFMWSLVFSVALVAAAVYGCIALTHVLCRPRRGCCGRRRSASPACLSDPSLGEHGFLNLKSSGLRLHYVSAGRGNGPLMLFLHGFPENWFSWRYQLREFQSRFHVVAVDLRGYGPSDAPRDVDCYTIDLLLVDIKDVILGLGYSKCILVAHDWGALLAWHFSIYYPSLVERMVVVSGAPMSVYQDYSLHHISQFFRSHYMFLFQLPWLPEKLLSMSDFQILKTTLTHRKTGIPCLTPSELEAFLYNFSQPGGLTGPLNYYRNLFRNFPLEPQELTTPTLLLWGEKDTYLELGLVEAIGSRFVPGRLEAHILPGIGHWIPQSNPQEMHQYMWAFLQDLLD.

A helical membrane pass occupies residues 22-42 (AFMWSLVFSVALVAAAVYGCI). The active-site Nucleophile is the Asp-173. The active-site Proton donor is the Tyr-281. His-337 serves as the catalytic Proton acceptor.

This sequence belongs to the AB hydrolase superfamily. Epoxide hydrolase family.

The protein resides in the microsome membrane. The catalysed reaction is an epoxide + H2O = an ethanediol. It carries out the reaction 9,10-epoxyoctadecanoate + H2O = 9,10-dihydroxyoctadecanoate. The enzyme catalyses 9,10-epoxy-(12Z)-octadecenoate + H2O = 9,10-dihydroxy-(12Z)-octadecenoate. It catalyses the reaction 8,9-epoxy-(5Z,11Z,14Z)-eicosatrienoate + H2O = 8,9-dihydroxy-(5Z,11Z,14Z)-eicosatrienoate. The catalysed reaction is 11,12-epoxy-(5Z,8Z,14Z)-eicosatrienoate + H2O = 11,12-dihydroxy-(5Z,8Z,14Z)-eicosatrienoate. It carries out the reaction 14,15-epoxy-(5Z,8Z,11Z)-eicosatrienoate + H2O = 14,15-dihydroxy-(5Z,8Z,11Z)-eicosatrienoate. Its activity is regulated as follows. Inhibited by 1-(1-acetylpiperidin-4-yl)-3-(4-(trifl uoromethoxy)phenyl)urea (TPAU), 1-cyclohexyl-3-dodecylurea (CDU), 12-(3-adamantan-1-yl-ureido)-dodecanoic acid (AUDA), 1-((3S, 5S, 7S)-adamantan-1-yl)-3-(5-(2-(2-ethoxyethoxy) ethoxy)pentyl)urea (AEPU) and to a lesser extent by 8-(3-((3S, 5S, 7S)-adamantan-1-yl)ureido) octanoic acid (AUOA). In terms of biological role, catalyzes the hydrolysis of epoxide-containing fatty acids. Active in vitro against epoxyeicosatrienoic acids (EETs) including 8,9-EET, 9,10-EET, 11,12-EET and 14,15-EET and leukotoxin. The sequence is that of Epoxide hydrolase 3 (EPHX3) from Homo sapiens (Human).